The following is a 564-amino-acid chain: NAD-dependent malic enzyme (564 aa).

Tyrosine 102 (proton donor) is an active-site residue. Arginine 155 contributes to the NAD(+) binding site. Residue lysine 173 is the Proton acceptor of the active site. Residues glutamate 244, aspartate 245, and aspartate 268 each coordinate a divalent metal cation. NAD(+)-binding residues include aspartate 268 and asparagine 417.

Belongs to the malic enzymes family. As to quaternary structure, homotetramer. Mg(2+) is required as a cofactor. It depends on Mn(2+) as a cofactor.

It catalyses the reaction (S)-malate + NAD(+) = pyruvate + CO2 + NADH. It carries out the reaction oxaloacetate + H(+) = pyruvate + CO2. This is NAD-dependent malic enzyme from Pseudomonas aeruginosa (strain UCBPP-PA14).